Consider the following 461-residue polypeptide: tRNA modification GTPase MnmE (461 aa).

Residues Arg22, Glu87, and Arg126 each coordinate (6S)-5-formyl-5,6,7,8-tetrahydrofolate. Positions 223-382 (GLSTVILGRP…LEEAIAALFF (160 aa)) constitute a TrmE-type G domain. Asn233 is a K(+) binding site. GTP contacts are provided by residues 233 to 238 (NVGKSS), 252 to 258 (TDIAGTT), and 277 to 280 (DTAG). Residue Ser237 participates in Mg(2+) binding. Residues Thr252, Ile254, and Thr257 each contribute to the K(+) site. A Mg(2+)-binding site is contributed by Thr258. Lys461 contributes to the (6S)-5-formyl-5,6,7,8-tetrahydrofolate binding site.

This sequence belongs to the TRAFAC class TrmE-Era-EngA-EngB-Septin-like GTPase superfamily. TrmE GTPase family. As to quaternary structure, homodimer. Heterotetramer of two MnmE and two MnmG subunits. It depends on K(+) as a cofactor.

Its subcellular location is the cytoplasm. Its function is as follows. Exhibits a very high intrinsic GTPase hydrolysis rate. Involved in the addition of a carboxymethylaminomethyl (cmnm) group at the wobble position (U34) of certain tRNAs, forming tRNA-cmnm(5)s(2)U34. The sequence is that of tRNA modification GTPase MnmE from Lysinibacillus sphaericus (strain C3-41).